Here is a 359-residue protein sequence, read N- to C-terminus: POU domain, class 5, transcription factor 1B (359 aa).

Disordered stretches follow at residues 1–53 and 87–116; these read MAGH…GVGP and QGGL…EPCT. Phosphoserine is present on S111. The region spanning 138–212 is the POU-specific domain; it reads DIKALQKELE…LLQKWVEEAD (75 aa). Positions 229-288 form a DNA-binding region, homeobox; sequence ARKRKRTSIENRVRGNLENLFLQCPKPTLQISHIAQQLGLEKDVVRVWFCNRRQKGKRSS. T235 carries the post-translational modification Phosphothreonine. Residues S236, S288, and S289 each carry the phosphoserine modification. The interval 287 to 322 is disordered; the sequence is SSSDYAQREDFEAAGSPFSGGPVSFPPAPGPHFGTP. Low complexity predominate over residues 299 to 309; sequence AAGSPFSGGPV. At S354 the chain carries Phosphoserine.

The protein belongs to the POU transcription factor family. Class-5 subfamily. In terms of tissue distribution, detected in epithelial cells of the prostate (at protein level). Detected at the mRNA level in several cancer tissues (breast, uterine cervix, lung, thyroid gland, esophagus, colon, urinary bladder, and glioma).

The protein localises to the nucleus. It localises to the cytoplasm. Its function is as follows. Shows weak transcriptional activator activity. This chain is POU domain, class 5, transcription factor 1B (POU5F1B), found in Homo sapiens (Human).